The primary structure comprises 321 residues: Phospho-N-acetylmuramoyl-pentapeptide-transferase (321 aa).

10 consecutive transmembrane segments (helical) span residues Met-1–Ile-21, Met-50–Val-70, Ile-76–Ile-96, Phe-112–Val-132, Ile-140–Trp-160, Gly-176–Leu-196, Ala-200–Leu-220, Val-225–Met-245, Leu-250–Val-270, and Val-300–Val-320.

Belongs to the glycosyltransferase 4 family. MraY subfamily. Mg(2+) serves as cofactor.

Its subcellular location is the cell membrane. It carries out the reaction UDP-N-acetyl-alpha-D-muramoyl-L-alanyl-gamma-D-glutamyl-L-lysyl-D-alanyl-D-alanine + di-trans,octa-cis-undecaprenyl phosphate = Mur2Ac(oyl-L-Ala-gamma-D-Glu-L-Lys-D-Ala-D-Ala)-di-trans,octa-cis-undecaprenyl diphosphate + UMP. It participates in cell wall biogenesis; peptidoglycan biosynthesis. Catalyzes the initial step of the lipid cycle reactions in the biosynthesis of the cell wall peptidoglycan: transfers peptidoglycan precursor phospho-MurNAc-pentapeptide from UDP-MurNAc-pentapeptide onto the lipid carrier undecaprenyl phosphate, yielding undecaprenyl-pyrophosphoryl-MurNAc-pentapeptide, known as lipid I. This chain is Phospho-N-acetylmuramoyl-pentapeptide-transferase, found in Staphylococcus haemolyticus (strain JCSC1435).